Consider the following 314-residue polypeptide: Putative peptide transport system permease protein BRA1092/BS1330_II1084 (314 aa).

Transmembrane regions (helical) follow at residues 12 to 32 (AIPV…LLPG), 101 to 121 (LALL…VVAA), 135 to 155 (LALL…VILF), 177 to 197 (WLRS…GYLA), 237 to 257 (VSVL…SVVI), and 286 to 306 (MLFL…LYTI). The ABC transmembrane type-1 domain occupies 95–304 (LPVTISLALL…AINVLVDILY (210 aa)).

It belongs to the binding-protein-dependent transport system permease family. The complex is composed of two ATP-binding proteins (BRA1094), two transmembrane proteins (BRA1092 and BRA1093) and a solute-binding protein (BRA1090).

Its subcellular location is the cell inner membrane. In terms of biological role, probably part of an ABC transporter complex that could be involved in peptide import. Probably responsible for the translocation of the substrate across the membrane. This Brucella suis biovar 1 (strain 1330) protein is Putative peptide transport system permease protein BRA1092/BS1330_II1084.